The following is a 248-amino-acid chain: Triosephosphate isomerase (248 aa).

Position 11–13 (11–13 (NWK)) interacts with substrate. Residue His-95 is the Electrophile of the active site. The active-site Proton acceptor is Glu-167. Substrate-binding positions include Gly-173, Ser-212, and 233–234 (GG).

Belongs to the triosephosphate isomerase family. As to quaternary structure, homodimer.

Its subcellular location is the cytoplasm. The catalysed reaction is D-glyceraldehyde 3-phosphate = dihydroxyacetone phosphate. The protein operates within carbohydrate biosynthesis; gluconeogenesis. Its pathway is carbohydrate degradation; glycolysis; D-glyceraldehyde 3-phosphate from glycerone phosphate: step 1/1. In terms of biological role, involved in the gluconeogenesis. Catalyzes stereospecifically the conversion of dihydroxyacetone phosphate (DHAP) to D-glyceraldehyde-3-phosphate (G3P). The sequence is that of Triosephosphate isomerase from Ralstonia nicotianae (strain ATCC BAA-1114 / GMI1000) (Ralstonia solanacearum).